The following is a 1003-amino-acid chain: Glycine--tRNA ligase (1003 aa).

The glycine--tRNA ligase alpha subunit stretch occupies residues 1–310 (MSSQPLTLQT…VTPKKIPTIC (310 aa)). Positions 311–1003 (QPEDFLLEIG…CFGFYAWGVL (693 aa)) are glycine--tRNA ligase beta subunit.

The protein belongs to the class-II aminoacyl-tRNA synthetase family.

It localises to the cytoplasm. It catalyses the reaction tRNA(Gly) + glycine + ATP = glycyl-tRNA(Gly) + AMP + diphosphate. The protein is Glycine--tRNA ligase (glyQS) of Chlamydia trachomatis serovar D (strain ATCC VR-885 / DSM 19411 / UW-3/Cx).